We begin with the raw amino-acid sequence, 90 residues long: Small ribosomal subunit protein bS16 (90 aa).

This sequence belongs to the bacterial ribosomal protein bS16 family.

The sequence is that of Small ribosomal subunit protein bS16 from Anoxybacillus flavithermus (strain DSM 21510 / WK1).